A 954-amino-acid polypeptide reads, in one-letter code: Glycine dehydrogenase (decarboxylating) (954 aa).

At lysine 704 the chain carries N6-(pyridoxal phosphate)lysine.

It belongs to the GcvP family. The glycine cleavage system is composed of four proteins: P, T, L and H. Requires pyridoxal 5'-phosphate as cofactor.

It carries out the reaction N(6)-[(R)-lipoyl]-L-lysyl-[glycine-cleavage complex H protein] + glycine + H(+) = N(6)-[(R)-S(8)-aminomethyldihydrolipoyl]-L-lysyl-[glycine-cleavage complex H protein] + CO2. The glycine cleavage system catalyzes the degradation of glycine. The P protein binds the alpha-amino group of glycine through its pyridoxal phosphate cofactor; CO(2) is released and the remaining methylamine moiety is then transferred to the lipoamide cofactor of the H protein. This Sinorhizobium medicae (strain WSM419) (Ensifer medicae) protein is Glycine dehydrogenase (decarboxylating).